The following is a 283-amino-acid chain: ATP phosphoribosyltransferase (283 aa).

Belongs to the ATP phosphoribosyltransferase family. Long subfamily. The cofactor is Mg(2+).

Its subcellular location is the cytoplasm. It carries out the reaction 1-(5-phospho-beta-D-ribosyl)-ATP + diphosphate = 5-phospho-alpha-D-ribose 1-diphosphate + ATP. It functions in the pathway amino-acid biosynthesis; L-histidine biosynthesis; L-histidine from 5-phospho-alpha-D-ribose 1-diphosphate: step 1/9. With respect to regulation, feedback inhibited by histidine. Functionally, catalyzes the condensation of ATP and 5-phosphoribose 1-diphosphate to form N'-(5'-phosphoribosyl)-ATP (PR-ATP). Has a crucial role in the pathway because the rate of histidine biosynthesis seems to be controlled primarily by regulation of HisG enzymatic activity. The chain is ATP phosphoribosyltransferase from Parabacteroides distasonis (strain ATCC 8503 / DSM 20701 / CIP 104284 / JCM 5825 / NCTC 11152).